Here is a 179-residue protein sequence, read N- to C-terminus: Peptide deformylase 2 (179 aa).

Residues Cys102 and His144 each coordinate Fe cation. The active site involves Glu145. A Fe cation-binding site is contributed by His148.

It belongs to the polypeptide deformylase family. Requires Fe(2+) as cofactor.

It catalyses the reaction N-terminal N-formyl-L-methionyl-[peptide] + H2O = N-terminal L-methionyl-[peptide] + formate. In terms of biological role, removes the formyl group from the N-terminal Met of newly synthesized proteins. Requires at least a dipeptide for an efficient rate of reaction. N-terminal L-methionine is a prerequisite for activity but the enzyme has broad specificity at other positions. The sequence is that of Peptide deformylase 2 from Nostoc sp. (strain PCC 7120 / SAG 25.82 / UTEX 2576).